The following is a 1190-amino-acid chain: Serine/threonine-protein kinase N (1190 aa).

3 REM-1 domains span residues 28–102 (NLPE…QILL), 142–219 (ALEG…NREQ), and 242–322 (SSQP…ELPA). Residues 359 to 515 (LGGKPYQSVS…MALQLEPQGL (157 aa)) form the C2 domain. The span at 395 to 404 (PGRSRRDKDN) shows a compositional bias: basic and acidic residues. 4 disordered regions span residues 395–415 (PGRS…RSFV), 572–715 (HVHM…PPPP), 757–787 (PATP…QPPQ), and 811–832 (SPSS…RNVA). Low complexity-rich tracts occupy residues 576–588 (GSAG…TGSS) and 767–787 (AAAG…QPPQ). Residues 863-1122 (FRLLSVLGRG…AEDVKKQAFF (260 aa)) form the Protein kinase domain. Residues 869–877 (LGRGHFGKV) and Lys892 each bind ATP. The active-site Proton acceptor is Asp988. The AGC-kinase C-terminal domain occupies 1123–1190 (RSIVWDDLLL…QDFSYTAEWC (68 aa)).

Belongs to the protein kinase superfamily. Ser/Thr protein kinase family. Interacts (via N-terminus) with Rho1 (via REM repeats), Rac1 (via REM 1 repeat) and Rac2. Phosphorylated. Autophosphorylated; autophosphorylation is stimulated by GTP-bound Rho/Rac GTPases.

The protein localises to the cytoplasm. The protein resides in the nucleus. It is found in the membrane. It localises to the cell projection. Its subcellular location is the lamellipodium. The protein localises to the cytoskeleton. The protein resides in the cleavage furrow. It is found in the midbody. It localises to the cell junction. The catalysed reaction is L-seryl-[protein] + ATP = O-phospho-L-seryl-[protein] + ADP + H(+). It carries out the reaction L-threonyl-[protein] + ATP = O-phospho-L-threonyl-[protein] + ADP + H(+). With respect to regulation, activated by lipids, particularly cardiolipin and to a lesser extent by other acidic phospholipids and unsaturated fatty acids. Two specific sites, Thr-1022 (activation loop of the kinase domain) and Thr-1164 (turn motif), may be needed to be phosphorylated for its full activation. Kinase activity is activated upon binding to GTP-bound Rho/Rac GTPases. Functionally, pkc-related serine/threonine-protein kinase and Rho/Rac effector protein that participates in specific signal transduction responses in the cell. May play a role in the regulation of cell cycle progression, actin cytoskeleton assembly, cell migration, cell adhesion and transcription activation signaling processes. Plays a role in regulating Rho-mediated dorsal closure during embryogenesis. The sequence is that of Serine/threonine-protein kinase N (Pkn) from Drosophila melanogaster (Fruit fly).